The sequence spans 249 residues: Basic leucine zipper 23 (249 aa).

The segment at 66–90 (KVSTDDTSESSGKKRPLGNREAVRK) is disordered. One can recognise a bZIP domain in the interval 74-121 (ESSGKKRPLGNREAVRKYREKKKAKAASLEDEVMRLKAVNNQLLKRLQ). Positions 78-98 (KKRPLGNREAVRKYREKKKAK) are basic motif. Residues 102 to 116 (LEDEVMRLKAVNNQL) form a leucine-zipper region.

It is found in the nucleus. Functionally, transcription factor involved in the response to zinc ion deficiency. Binds to the consensus sequence 5'-[AG]TGTCGACA[CT]-3' also called zinc deficiency response element (ZDRE). The ZDRE sequence is conserved in the plant kingdom and present in the promoters of genes that constitute the primary response to zinc deficiency, comprising additional ZIP metal transporter genes. Required for zinc accumulation in roots. Mediates the expression of the zinc transporter ZIP12 during growth in zinc-deficient conditions. ZIP12 transporter is involved in zinc uptake in roots. The sequence is that of Basic leucine zipper 23 from Arabidopsis thaliana (Mouse-ear cress).